The chain runs to 171 residues: Histone H1, gonadal (171 aa).

Disordered stretches follow at residues 1–40 (AASP…AHPP) and 133–171 (AKAK…KAKP). Residues 9–35 (ASPRKSPKKSPRKSPKKKSPRKRKARS) are compositionally biased toward basic residues. The H15 domain occupies 37-111 (AHPPVIDMIT…GATGRFRVGA (75 aa)).

This sequence belongs to the histone H1/H5 family. In terms of tissue distribution, sperm.

Its subcellular location is the nucleus. It is found in the chromosome. In terms of biological role, histones H1 are necessary for the condensation of nucleosome chains into higher-order structures. The protein is Histone H1, gonadal of Echinolampas crassa (Sea urchin).